Reading from the N-terminus, the 194-residue chain is MGVAPVSNQPLVAQQPKGIIDPSTGKPIGSNDAFFGEINNELADKGFLVTSTDELINWARTGSLMWMTFGLACCAVEMMQLSMPRYDVERFGFAPRASPRQSDVMIVAGTLTNKMAPALRKVYDQMPEPRYVISMGSCANGGGYYHYSYSVVRGCDRIVPIDIYVPGCPPTAEALLYGVLLLQKKIRRTGTIER.

[4Fe-4S] cluster is bound by residues C73, C74, C138, and C168.

The protein belongs to the complex I 20 kDa subunit family. NDH-1 is composed of 14 different subunits. Subunits NuoB, C, D, E, F, and G constitute the peripheral sector of the complex. [4Fe-4S] cluster serves as cofactor.

It is found in the cell inner membrane. It catalyses the reaction a quinone + NADH + 5 H(+)(in) = a quinol + NAD(+) + 4 H(+)(out). NDH-1 shuttles electrons from NADH, via FMN and iron-sulfur (Fe-S) centers, to quinones in the respiratory chain. The immediate electron acceptor for the enzyme in this species is believed to be ubiquinone. Couples the redox reaction to proton translocation (for every two electrons transferred, four hydrogen ions are translocated across the cytoplasmic membrane), and thus conserves the redox energy in a proton gradient. The chain is NADH-quinone oxidoreductase subunit B from Rhizobium leguminosarum bv. trifolii (strain WSM2304).